We begin with the raw amino-acid sequence, 419 residues long: UDP-N-acetylglucosamine 1-carboxyvinyltransferase (419 aa).

Residue 22–23 (KN) coordinates phosphoenolpyruvate. Arg92 serves as a coordination point for UDP-N-acetyl-alpha-D-glucosamine. The active-site Proton donor is the Cys116. Cys116 is modified (2-(S-cysteinyl)pyruvic acid O-phosphothioketal). Residues 121-125 (RPVDQ), Asp306, and Ile328 contribute to the UDP-N-acetyl-alpha-D-glucosamine site.

Belongs to the EPSP synthase family. MurA subfamily.

The protein localises to the cytoplasm. The enzyme catalyses phosphoenolpyruvate + UDP-N-acetyl-alpha-D-glucosamine = UDP-N-acetyl-3-O-(1-carboxyvinyl)-alpha-D-glucosamine + phosphate. It functions in the pathway cell wall biogenesis; peptidoglycan biosynthesis. In terms of biological role, cell wall formation. Adds enolpyruvyl to UDP-N-acetylglucosamine. Target for the antibiotic phosphomycin. In Acinetobacter guillouiae (Acinetobacter genomosp. 11), this protein is UDP-N-acetylglucosamine 1-carboxyvinyltransferase.